The following is a 420-amino-acid chain: Mannose-1-phosphate guanylyltransferase regulatory subunit alpha (420 aa).

The tract at residues 2–251 is substrate-binding domain; the sequence is LKAVILIGGP…DGIWSQIKSA (250 aa). 2 residues coordinate GDP-alpha-D-mannose: Glu85 and Gln247. The tract at residues 273 to 420 is hexapeptide repeat domain; that stretch reads LAKHTPGGPR…SRSFTNQIIL (148 aa). Residues 356 to 384 are C-loop; that stretch reads TPNDPNPNDPRAHMDSESLFKDGKLLPAI.

The protein belongs to the transferase hexapeptide repeat family. As to quaternary structure, component of the GMPPA-GMPPB mannose-1-phosphate guanylyltransferase complex composed of 4 GMPPA subunits and 8 GMPPB subunits; the complex is organized into three layers, a central layer made up of 2 GMPPA dimers sandwiched between two layers each made up of 2 GMPPB dimers. As to expression, expressed in the liver (at protein level).

It is found in the cytoplasm. Functionally, regulatory subunit of the GMPPA-GMPPB mannose-1-phosphate guanylyltransferase complex; reduces the catalytic activity of GMPPB when part of the complex. Mediates allosteric feedback inhibition of GMPPB catalytic activity upon binding GDP-alpha-D-mannose. Together with GMPPB regulates GDP-alpha-D-mannose levels. The sequence is that of Mannose-1-phosphate guanylyltransferase regulatory subunit alpha (GMPPA) from Sus scrofa (Pig).